Consider the following 385-residue polypeptide: tRNA-specific 2-thiouridylase MnmA (385 aa).

ATP contacts are provided by residues 27-34 (AMSGGVDS) and leucine 53. Cysteine 121 (nucleophile) is an active-site residue. Cysteine 121 and cysteine 217 are oxidised to a cystine. An ATP-binding site is contributed by glycine 145. The segment at 167 to 169 (KDQ) is interaction with tRNA. The Cysteine persulfide intermediate role is filled by cysteine 217.

The protein belongs to the MnmA/TRMU family.

The protein localises to the cytoplasm. It carries out the reaction S-sulfanyl-L-cysteinyl-[protein] + uridine(34) in tRNA + AH2 + ATP = 2-thiouridine(34) in tRNA + L-cysteinyl-[protein] + A + AMP + diphosphate + H(+). Functionally, catalyzes the 2-thiolation of uridine at the wobble position (U34) of tRNA, leading to the formation of s(2)U34. This is tRNA-specific 2-thiouridylase MnmA from Sorangium cellulosum (strain So ce56) (Polyangium cellulosum (strain So ce56)).